The following is a 490-amino-acid chain: ATP synthase subunit beta, chloroplastic (490 aa).

170 to 177 lines the ATP pocket; it reads GGAGVGKT.

The protein belongs to the ATPase alpha/beta chains family. As to quaternary structure, F-type ATPases have 2 components, CF(1) - the catalytic core - and CF(0) - the membrane proton channel. CF(1) has five subunits: alpha(3), beta(3), gamma(1), delta(1), epsilon(1). CF(0) has four main subunits: a(1), b(1), b'(1) and c(9-12).

The protein resides in the plastid. Its subcellular location is the chloroplast thylakoid membrane. The catalysed reaction is ATP + H2O + 4 H(+)(in) = ADP + phosphate + 5 H(+)(out). In terms of biological role, produces ATP from ADP in the presence of a proton gradient across the membrane. The catalytic sites are hosted primarily by the beta subunits. The polypeptide is ATP synthase subunit beta, chloroplastic (Cressa truxillensis (Spreading alkaliweed)).